The chain runs to 62 residues: Small ribosomal subunit protein eS27 (62 aa).

Cys-17, Cys-20, Cys-36, and Cys-39 together coordinate Zn(2+). Residues 17-39 (CPDCDNEQTVFSKASTTVKCVVC) form a C4-type zinc finger.

Belongs to the eukaryotic ribosomal protein eS27 family. In terms of assembly, part of the 30S ribosomal subunit. The cofactor is Zn(2+).

This is Small ribosomal subunit protein eS27 from Methanoregula boonei (strain DSM 21154 / JCM 14090 / 6A8).